The chain runs to 440 residues: 23S rRNA (uracil(1939)-C(5))-methyltransferase RlmD (440 aa).

In terms of domain architecture, TRAM spans 8–69; the sequence is PQKINKLQRE…RQFGLATTKK (62 aa). [4Fe-4S] cluster-binding residues include Cys-82, Cys-88, Cys-91, and Cys-169. Residues Gln-272, Phe-301, Asn-306, Glu-322, Asp-349, and Asp-370 each coordinate S-adenosyl-L-methionine. The active-site Nucleophile is Cys-396.

Belongs to the class I-like SAM-binding methyltransferase superfamily. RNA M5U methyltransferase family. RlmD subfamily.

The catalysed reaction is uridine(1939) in 23S rRNA + S-adenosyl-L-methionine = 5-methyluridine(1939) in 23S rRNA + S-adenosyl-L-homocysteine + H(+). Catalyzes the formation of 5-methyl-uridine at position 1939 (m5U1939) in 23S rRNA. The polypeptide is 23S rRNA (uracil(1939)-C(5))-methyltransferase RlmD (Mannheimia succiniciproducens (strain KCTC 0769BP / MBEL55E)).